A 457-amino-acid chain; its full sequence is UDP-glycosyltransferase 708C2 (457 aa).

The active-site Proton acceptor is histidine 32. Residue histidine 32 coordinates an anthocyanidin. Aspartate 129 functions as the Charge relay in the catalytic mechanism. Residue threonine 150 coordinates UDP-alpha-D-glucose. A UDP region spans residues 279 to 280 (NR). UDP-alpha-D-glucose-binding residues include valine 341, glutamine 343, histidine 358, tryptophan 361, asparagine 362, serine 363, and glutamate 366. Glycine 381 provides a ligand contact to an anthocyanidin. UDP-alpha-D-glucose-binding residues include aspartate 382 and glutamine 383.

This sequence belongs to the UDP-glycosyltransferase family. As to expression, expressed in cotyledons. Not detected in flowers, leaves, roots and hypocotyls.

The catalysed reaction is a 3'-hydro-2'-hydroxy-beta-oxodihydrochalcone + UDP-alpha-D-glucose = a 3'-(beta-D-glucopyranosyl)-2'-hydroxy-beta-oxodihydrochalcone + UDP + H(+). In terms of biological role, UDP-glucose-dependent glucosyltransferase catalyzing the c-glucosylation of 2-hydroxyflavanones (2-hydroxynaringenin, 2-hydroxyeriodictyol and 2-hydroxypinocembrin) and phloretin. No activity with flavanones, flavones or flavonols. The protein is UDP-glycosyltransferase 708C2 of Fagopyrum esculentum (Common buckwheat).